A 216-amino-acid chain; its full sequence is Imidazole glycerol phosphate synthase subunit HisH (216 aa).

The 215-residue stretch at 2–216 (RVAIIDYGSG…LISNFLRWKP (215 aa)) folds into the Glutamine amidotransferase type-1 domain. Cysteine 88 (nucleophile) is an active-site residue. Active-site residues include histidine 196 and glutamate 198.

In terms of assembly, heterodimer of HisH and HisF.

It is found in the cytoplasm. It catalyses the reaction 5-[(5-phospho-1-deoxy-D-ribulos-1-ylimino)methylamino]-1-(5-phospho-beta-D-ribosyl)imidazole-4-carboxamide + L-glutamine = D-erythro-1-(imidazol-4-yl)glycerol 3-phosphate + 5-amino-1-(5-phospho-beta-D-ribosyl)imidazole-4-carboxamide + L-glutamate + H(+). It carries out the reaction L-glutamine + H2O = L-glutamate + NH4(+). Its pathway is amino-acid biosynthesis; L-histidine biosynthesis; L-histidine from 5-phospho-alpha-D-ribose 1-diphosphate: step 5/9. Functionally, IGPS catalyzes the conversion of PRFAR and glutamine to IGP, AICAR and glutamate. The HisH subunit catalyzes the hydrolysis of glutamine to glutamate and ammonia as part of the synthesis of IGP and AICAR. The resulting ammonia molecule is channeled to the active site of HisF. The polypeptide is Imidazole glycerol phosphate synthase subunit HisH (Agrobacterium fabrum (strain C58 / ATCC 33970) (Agrobacterium tumefaciens (strain C58))).